A 274-amino-acid polypeptide reads, in one-letter code: Penicillin-insensitive murein endopeptidase (274 aa).

An N-terminal signal peptide occupies residues Met-1–Ala-19. 3 disulfide bridges follow: Cys-44–Cys-265, Cys-187–Cys-235, and Cys-216–Cys-223. Positions 110, 113, 120, 147, 150, and 211 each coordinate Zn(2+). Residues Asp-225–Leu-274 form a disordered region.

It belongs to the peptidase M74 family. Dimer. Requires Zn(2+) as cofactor.

It localises to the periplasm. In terms of biological role, murein endopeptidase that cleaves the D-alanyl-meso-2,6-diamino-pimelyl amide bond that connects peptidoglycan strands. Likely plays a role in the removal of murein from the sacculus. The polypeptide is Penicillin-insensitive murein endopeptidase (Salmonella choleraesuis (strain SC-B67)).